Consider the following 546-residue polypeptide: CTP synthase (546 aa).

An amidoligase domain region spans residues 1–265; it reads MTKYVFVTGG…DEIVCHKLNI (265 aa). S13 contacts CTP. S13 contributes to the UTP binding site. Residues 14–19 and D71 contribute to the ATP site; that span reads SLGKGI. Residues D71 and E139 each coordinate Mg(2+). CTP contacts are provided by residues 146–148, 186–191, and K222; these read DIE and KTKPTQ. UTP contacts are provided by residues 186–191 and K222; that span reads KTKPTQ. The 254-residue stretch at 290–543 folds into the Glutamine amidotransferase type-1 domain; it reads KIAFVGKYVD…VKAALANQKA (254 aa). G351 is an L-glutamine binding site. The active-site Nucleophile; for glutamine hydrolysis is the C378. L-glutamine contacts are provided by residues 379–382, E402, and R469; that span reads LGMQ. Catalysis depends on residues H516 and E518.

The protein belongs to the CTP synthase family. In terms of assembly, homotetramer.

The enzyme catalyses UTP + L-glutamine + ATP + H2O = CTP + L-glutamate + ADP + phosphate + 2 H(+). The catalysed reaction is L-glutamine + H2O = L-glutamate + NH4(+). It carries out the reaction UTP + NH4(+) + ATP = CTP + ADP + phosphate + 2 H(+). Its pathway is pyrimidine metabolism; CTP biosynthesis via de novo pathway; CTP from UDP: step 2/2. Allosterically activated by GTP, when glutamine is the substrate; GTP has no effect on the reaction when ammonia is the substrate. The allosteric effector GTP functions by stabilizing the protein conformation that binds the tetrahedral intermediate(s) formed during glutamine hydrolysis. Inhibited by the product CTP, via allosteric rather than competitive inhibition. Functionally, catalyzes the ATP-dependent amination of UTP to CTP with either L-glutamine or ammonia as the source of nitrogen. Regulates intracellular CTP levels through interactions with the four ribonucleotide triphosphates. The sequence is that of CTP synthase from Dechloromonas aromatica (strain RCB).